Here is a 133-residue protein sequence, read N- to C-terminus: ATP synthase epsilon chain, chloroplastic (133 aa).

This sequence belongs to the ATPase epsilon chain family. As to quaternary structure, F-type ATPases have 2 components, CF(1) - the catalytic core - and CF(0) - the membrane proton channel. CF(1) has five subunits: alpha(3), beta(3), gamma(1), delta(1), epsilon(1). CF(0) has three main subunits: a, b and c.

The protein resides in the plastid. It is found in the chloroplast thylakoid membrane. Functionally, produces ATP from ADP in the presence of a proton gradient across the membrane. The polypeptide is ATP synthase epsilon chain, chloroplastic (Jasminum nudiflorum (Winter jasmine)).